We begin with the raw amino-acid sequence, 299 residues long: Hydrogenase maturation factor HypB (299 aa).

Residues C2, C5, and C7 each contribute to the Ni(2+) site. A disordered region spans residues 18-57 (EVGDDGHGHHHHDGHHDHDHDHDHHRGDHEHDDHHHAEDG). Residues 31–57 (GHHDHDHDHDHHRGDHEHDDHHHAEDG) are compositionally biased toward basic and acidic residues. A G-domain region spans residues 107–268 (ALNFVSSPGS…LRVNPRLQTL (162 aa)). Ni(2+) contacts are provided by C167, H168, and C199. Zn(2+)-binding residues include C167, H168, and C199.

This sequence belongs to the SIMIBI class G3E GTPase family. HypB/HupM subfamily.

Its function is as follows. Involved in the maturation of [NiFe] hydrogenases. Required for nickel insertion into the metal center of the hydrogenase. Exhibits a low intrinsic GTPase activity, which is essential for nickel insertion. Is able to bind 4 nickel ions per subunit. Can also bind zinc. In Rhizobium leguminosarum bv. viciae, this protein is Hydrogenase maturation factor HypB.